The chain runs to 739 residues: Phosphoribosylformylglycinamidine synthase subunit PurL (739 aa).

Histidine 54 is an active-site residue. Positions 57 and 96 each coordinate ATP. Position 98 (glutamate 98) interacts with Mg(2+). Substrate-binding positions include 99–102 (SHNH) and arginine 121. The active-site Proton acceptor is histidine 100. Aspartate 122 provides a ligand contact to Mg(2+). Residue glutamine 245 coordinates substrate. Position 273 (aspartate 273) interacts with Mg(2+). 317-319 (ESQ) lines the substrate pocket. The ATP site is built by aspartate 500 and glycine 537. Asparagine 538 is a Mg(2+) binding site. Serine 540 is a binding site for substrate.

This sequence belongs to the FGAMS family. In terms of assembly, monomer. Part of the FGAM synthase complex composed of 1 PurL, 1 PurQ and 2 PurS subunits.

Its subcellular location is the cytoplasm. It carries out the reaction N(2)-formyl-N(1)-(5-phospho-beta-D-ribosyl)glycinamide + L-glutamine + ATP + H2O = 2-formamido-N(1)-(5-O-phospho-beta-D-ribosyl)acetamidine + L-glutamate + ADP + phosphate + H(+). It participates in purine metabolism; IMP biosynthesis via de novo pathway; 5-amino-1-(5-phospho-D-ribosyl)imidazole from N(2)-formyl-N(1)-(5-phospho-D-ribosyl)glycinamide: step 1/2. Its function is as follows. Part of the phosphoribosylformylglycinamidine synthase complex involved in the purines biosynthetic pathway. Catalyzes the ATP-dependent conversion of formylglycinamide ribonucleotide (FGAR) and glutamine to yield formylglycinamidine ribonucleotide (FGAM) and glutamate. The FGAM synthase complex is composed of three subunits. PurQ produces an ammonia molecule by converting glutamine to glutamate. PurL transfers the ammonia molecule to FGAR to form FGAM in an ATP-dependent manner. PurS interacts with PurQ and PurL and is thought to assist in the transfer of the ammonia molecule from PurQ to PurL. The sequence is that of Phosphoribosylformylglycinamidine synthase subunit PurL from Bacillus cytotoxicus (strain DSM 22905 / CIP 110041 / 391-98 / NVH 391-98).